Consider the following 334-residue polypeptide: Replication factor C small subunit (334 aa).

Position 49–56 (49–56 (GPPGVGKT)) interacts with ATP.

This sequence belongs to the activator 1 small subunits family. RfcS subfamily. Heteromultimer composed of small subunits (RfcS) and large subunits (RfcL).

In terms of biological role, part of the RFC clamp loader complex which loads the PCNA sliding clamp onto DNA. The chain is Replication factor C small subunit from Methanosarcina barkeri (strain Fusaro / DSM 804).